The chain runs to 1218 residues: NACHT, LRR and PYD domains-containing protein 1a allele 4 (1218 aa).

Over residues 1 to 29 (MGESQSKQESNTRVAQHGSQQDVDPTFQT) the composition is skewed to polar residues. Disordered stretches follow at residues 1 to 44 (MGES…QVEQ) and 71 to 91 (EMDH…DRSE). Basic residues predominate over residues 77 to 87 (RRHSHQSKKKL). The NACHT domain occupies 175–484 (QLVIIEGAAG…EFFAAMSYIL (310 aa)). ATP is bound at residue 181–188 (GAAGIGKS). LRR repeat units lie at residues 343–364 (KERN…LTLC), 673–693 (NLEE…RSLC), and 730–750 (RLAE…RQLC). The span at 799–815 (TMPTENTDGEESLTSSK) shows a compositional bias: polar residues. The interval 799 to 842 (TMPTENTDGEESLTSSKQQQQQSGDKHMEPLGTDDDFWGPSGPV) is disordered. The tract at residues 835-968 (FWGPSGPVST…HFAVLENPSF (134 aa)) is ZU5. An FIIND domain is found at 835 to 1118 (FWGPSGPVST…LRPALPRMAS (284 aa)). The segment at 969-1118 (SPMGVLLRMI…LRPALPRMAS (150 aa)) is UPA. The region spanning 1122–1211 (DAPALLHFVD…HLIMDLLEKS (90 aa)) is the CARD domain.

It belongs to the NLRP family. As to quaternary structure, interacts (via LRR repeats) with BCL2 and BCL2L1 (via the loop between motifs BH4 and BH3). Interacts with NOD2; this interaction is enhanced in the presence of muramyl dipeptide (MDP) and increases IL1B release. Interacts with EIF2AK2/PKR; this interaction requires EIF2AK2 activity, is accompanied by EIF2AK2 autophosphorylation and promotes inflammasome assembly in response to danger-associated signals. Interacts with MEFV; this interaction targets Nlrp1a to degradation by autophagy, hence preventing excessive IL1B- and IL18-mediated inflammation. Interacts with DPP9; leading to inhibit activation of the inflammasome. DPP9 acts via formation of a ternary complex, composed of a DPP9 homodimer, one full-length NLRP1 protein, and one cleaved C-terminus of Nlrp1a (NACHT, LRR and PYD domains-containing protein 1a, C-terminus). Interacts with DPP8; leading to inhibit activation of the inflammasome, probably via formation of a ternary complex with DPP8. Interacts with the C-terminal part of Nlrp1a (NACHT, LRR and PYD domains-containing protein 1a, C-terminus) in absence of pathogens and other damage-associated signals. In terms of assembly, interacts with the N-terminal part of Nlrp1a (NACHT, LRR and PYD domains-containing protein 1a, N-terminus) in absence of pathogens and other damage-associated signals. Homomultimer; forms the Nlrp1a inflammasome polymeric complex, a filament composed of homopolymers of this form in response to pathogens and other damage-associated signals. The Nlrp1a inflammasome polymeric complex directly recruits pro-caspase-1 (proCASP1) independently of PYCARD/ASC. Interacts (via CARD domain) with CASP1 (via CARD domain); leading to CASP1 activation. Autocatalytically cleaved. Autocatalytic cleavage in FIIND region occurs constitutively, prior to activation signals, and is required for inflammasome activity (IL1B release), possibly by facilitating CASP1 binding. Both N- and C-terminal parts remain associated non-covalently. In terms of processing, ubiquitinated in response to pathogen-associated signals, leading to its degradation by the proteasome and subsequent release of the cleaved C-terminal part of the protein (NACHT, LRR and PYD domains-containing protein 1a, C-terminus), which polymerizes and forms the Nlrp1a inflammasome.

It localises to the cytoplasm. It is found in the cytosol. Its subcellular location is the nucleus. The protein resides in the inflammasome. Activated by pathogens and other damage-associated signals: activation promotes ubiquitination and degradation of the N-terminal part, releasing the cleaved C-terminal part of the protein (NACHT, LRR and PYD domains-containing protein 1a, C-terminus), which polymerizes and forms the Nlrp1a inflammasome. Nlrp1a inflammasome is inhibited by DPP8 and DPP9, which sequester the C-terminal fragment of Nlrp1a (NACHT, LRR and PYD domains-containing protein 1a, C-terminus) in a ternary complex, thereby preventing Nlrp1a oligomerization and activation. Nlrp1a inflammasome is strongly activated by Val-boroPro (Talabostat, PT-100), an inhibitor of dipeptidyl peptidases DPP8 and DPP9. Val-boroPro relieves inhibition of DPP8 and/or DPP9 by promoting disruption of the ternary complex, releasing its C-terminal part from autoinhibition. Not activated by cleavage by B.anthracis lethal toxin (LT) endopeptidase. In terms of biological role, acts as the sensor component of the Nlrp1a inflammasome, which mediates inflammasome activation in response to various pathogen-associated signals, leading to subsequent pyroptosis. Inflammasomes are supramolecular complexes that assemble in the cytosol in response to pathogens and other damage-associated signals and play critical roles in innate immunity and inflammation. Acts as a recognition receptor (PRR): recognizes specific pathogens and other damage-associated signals, such as Val-boroPro inhibitor, and mediates the formation of the inflammasome polymeric complex. In response to pathogen-associated signals, the N-terminal part of Nlrp1a is degraded by the proteasome, releasing the cleaved C-terminal part of the protein (NACHT, LRR and PYD domains-containing protein 1a, C-terminus), which polymerizes to initiate the formation of the inflammasome complex: the inflammasome directly recruits pro-caspase-1 (proCASP1) independently of PYCARD/ASC and promotes caspase-1 (CASP1) activation, which subsequently cleaves and activates inflammatory cytokines IL1B and IL18 and gasdermin-D (GSDMD), leading to pyroptosis. In the absence of GSDMD expression, the Nlrp1a inflammasome is able to recruit and activate CASP8, leading to activation of gasdermin-E (GSDME). Its function is as follows. Constitutes the precursor of the Nlrp1a inflammasome, which mediates autoproteolytic processing within the FIIND domain to generate the N-terminal and C-terminal parts, which are associated non-covalently in absence of pathogens and other damage-associated signals. Functionally, regulatory part that prevents formation of the Nlrp1a inflammasome: in absence of pathogens and other damage-associated signals, interacts with the C-terminal part of Nlrp1a (NACHT, LRR and PYD domains-containing protein 1a, C-terminus), preventing activation of the Nlrp1a inflammasome. In response to pathogen-associated signals, this part is ubiquitinated by the N-end rule pathway and degraded by the proteasome, releasing the cleaved C-terminal part of the protein, which polymerizes and forms the Nlrp1a inflammasome. Constitutes the active part of the Nlrp1a inflammasome. In absence of pathogens and other damage-associated signals, interacts with the N-terminal part of Nlrp1a (NACHT, LRR and PYD domains-containing protein 1a, N-terminus), preventing activation of the Nlrp1a inflammasome. In response to pathogen-associated signals, the N-terminal part of Nlrp1a is degraded by the proteasome, releasing this form, which polymerizes to form the Nlrp1a inflammasome complex: the Nlrp1a inflammasome complex then directly recruits pro-caspase-1 (proCASP1) and promotes caspase-1 (CASP1) activation, leading to gasdermin-D (GSDMD) cleavage and subsequent pyroptosis. This Rattus norvegicus (Rat) protein is NACHT, LRR and PYD domains-containing protein 1a allele 4.